Here is a 298-residue protein sequence, read N- to C-terminus: Small ribosomal subunit protein uS3 (298 aa).

One can recognise a KH type-2 domain in the interval 39-107 (VREYLKAKLK…PVAVNIEEVR (69 aa)). The tract at residues 214–298 (PAAVEARTDE…PAAAADGKGE (85 aa)) is disordered. The segment covering 219 to 245 (ARTDEERRPRGPRRDDRGARPGADRPA) has biased composition (basic and acidic residues). Residues 277–298 (KPAVQRVRKVAAPAAAADGKGE) show a composition bias toward low complexity.

Belongs to the universal ribosomal protein uS3 family. In terms of assembly, part of the 30S ribosomal subunit. Forms a tight complex with proteins S10 and S14.

Binds the lower part of the 30S subunit head. Binds mRNA in the 70S ribosome, positioning it for translation. The sequence is that of Small ribosomal subunit protein uS3 from Albidiferax ferrireducens (strain ATCC BAA-621 / DSM 15236 / T118) (Rhodoferax ferrireducens).